Reading from the N-terminus, the 701-residue chain is Glycine--tRNA ligase beta subunit (701 aa).

It belongs to the class-II aminoacyl-tRNA synthetase family. Tetramer of two alpha and two beta subunits.

The protein resides in the cytoplasm. The catalysed reaction is tRNA(Gly) + glycine + ATP = glycyl-tRNA(Gly) + AMP + diphosphate. The protein is Glycine--tRNA ligase beta subunit of Anaeromyxobacter dehalogenans (strain 2CP-1 / ATCC BAA-258).